The sequence spans 447 residues: Gustatory receptor family protein 3 (447 aa).

Over 1–69 (MTITASNTLE…HTHSSARNTM (69 aa)) the chain is Extracellular. The helical transmembrane segment at 70–90 (FKWPLTIYNYLTLAILTAATI) threads the bilayer. Topologically, residues 91-116 (RRISQIKQKSATNEEKDAAFHVLNPT) are cytoplasmic. A helical membrane pass occupies residues 117–137 (FVLTLCHALLMFSGLAAGFLL). Residues 138 to 171 (LKLQKQREKMYHVLDQGLGRNRNEEHDSHHFKLN) are Extracellular-facing. A helical transmembrane segment spans residues 172–192 (KLFISISFSFAAALSFVQIAT). Residues 193–211 (KMRYLDLPDTPDLINRKIY) are Cytoplasmic-facing. A helical transmembrane segment spans residues 212-232 (FVILEGYVIFIASSCISLVAI). Topologically, residues 233–292 (LFFQLCRILQFSIGQLIEEMVPKEKEECPLPEQSLQQIHDVQIHYQEISNAKLYIEQNFS) are extracellular. A helical membrane pass occupies residues 293 to 313 (FSLFYTYGCCIPLTCLLGYIA). The Cytoplasmic portion of the chain corresponds to 314 to 328 (FRNGIQADMAETFSV). Residues 329-349 (AIWLTNTMLALMLFSIPAFMI) form a helical membrane-spanning segment. Residues 350–405 (AEEGDKLLTASFKMYHETLCEERDLLVLSQMSFLSFQMHATKLTLTAGNFFMMNRK) lie on the Extracellular side of the membrane. A helical membrane pass occupies residues 406-426 (IMISLFSAIFTYFLILVQFDA). Over 427–447 (EKERAGECNNQSRVLIVQPPV) the chain is Cytoplasmic.

Belongs to the insect chemoreceptor superfamily. Gustatory receptor (GR) family. In terms of tissue distribution, expressed in I2 pharyngeal neurons.

It is found in the membrane. Chemoreceptor involved in light-induced avoidance behavior. Probably acts as a molecular sensor in I2 pharyngeal neurons, required for the inhibition of feeding in response to light and hydrogen peroxide. Involved in circadian rhythms, probably by acting as a light sensor. In contrast to lite-1, does not act as a photoreceptor. The polypeptide is Gustatory receptor family protein 3 (Caenorhabditis elegans).